The following is a 147-amino-acid chain: Proteinase inhibitor type-2 T (147 aa).

An N-terminal signal peptide occupies residues 1 to 25; the sequence is MAVHKEVSFVAYLLIVLGMFLYVDA. 2 consecutive repeat copies span residues 25 to 82 and 83 to 142. 8 cysteine pairs are disulfide-bonded: C28–C116, C32–C112, C40–C122, C52–C89, C55–C73, C56–C85, C62–C98, and C115–C133.

This sequence belongs to the protease inhibitor I20 (potato type II proteinase inhibitor) family.

Functionally, inhibitor of trypsin and chymotrypsin. The sequence is that of Proteinase inhibitor type-2 T (PIN2T) from Solanum tuberosum (Potato).